A 115-amino-acid chain; its full sequence is UPF0295 protein BPUM_0828 (115 aa).

The next 2 helical transmembrane spans lie at 13 to 33 (TFAL…VFFK) and 41 to 61 (FFML…FWIG).

It belongs to the UPF0295 family.

Its subcellular location is the cell membrane. This chain is UPF0295 protein BPUM_0828, found in Bacillus pumilus (strain SAFR-032).